A 60-amino-acid chain; its full sequence is Hemocyte defensin Cg-Defh2 (60 aa).

The N-terminal stretch at Leu1–Ala17 is a signal peptide. Beta-D-GlcNAc-(1-&gt;4)-Mur2Ac(oyl-L-Ala-gamma-D-Glu-L-Lys-D-Ala-D-Ala)-di-trans,octa-cis-undecaprenyl diphosphate contacts are provided by Phe19, Gly20, and Cys21. Disulfide bonds link Cys21–Cys42, Cys28–Cys51, Cys32–Cys53, and Cys37–Cys56. The binds to membrane interface stretch occupies residues Pro22–Gln25. Position 31 (His31) interacts with beta-D-GlcNAc-(1-&gt;4)-Mur2Ac(oyl-L-Ala-gamma-D-Glu-L-Lys-D-Ala-D-Ala)-di-trans,octa-cis-undecaprenyl diphosphate. The interval Asp43–Leu49 is binds to membrane interface. Residue Cys51 participates in beta-D-GlcNAc-(1-&gt;4)-Mur2Ac(oyl-L-Ala-gamma-D-Glu-L-Lys-D-Ala-D-Ala)-di-trans,octa-cis-undecaprenyl diphosphate binding.

It belongs to the invertebrate defensin family. Expressed in hemocytes.

The protein localises to the secreted. The protein resides in the target cell membrane. Functionally, antibacterial peptide mostly active against Gram-positive bacteria. It acts by selectively inhibiting peptidoglycan biosynthesis through complex formation with the cell wall precursor lipid II (1:1 molar ratio) thus inhibiting cell wall synthesis. It does not disrupt cell membranes. Is noticeably more potent than Cg-Defh1. In Magallana gigas (Pacific oyster), this protein is Hemocyte defensin Cg-Defh2.